The following is a 505-amino-acid chain: Buccalin (505 aa).

A signal peptide spans 1-25; the sequence is MAHHRGHRHILLYVSLALSLGLALA. A propeptide spanning residues 26 to 62 is cleaved from the precursor; that stretch reads EDATDPSDDTGSFDDVEAVSEEADLDPYSMSQELNKR. At valine 74 the chain carries Valine amide. A leucine amide mark is found at leucine 88 and leucine 102. Glutamine 106 is modified (pyrrolidone carboxylic acid). Isoleucine 116 is modified (isoleucine amide). Leucine 129, leucine 143, leucine 157, leucine 171, leucine 185, leucine 199, leucine 213, leucine 227, leucine 241, leucine 254, leucine 267, leucine 281, leucine 294, leucine 307, leucine 321, and leucine 335 each carry leucine amide. A Glutamic acid 1-amide modification is found at glutamate 349. 6 positions are modified to leucine amide: leucine 363, leucine 377, leucine 391, leucine 405, leucine 419, and leucine 433. Isoleucine amide is present on residues isoleucine 447 and isoleucine 461. At glutamine 465 the chain carries Pyrrolidone carboxylic acid. Residues 472 to 505 form a disordered region; the sequence is SGRLGKRSSSEQEEEDVRQVEKRSTTEEQSSKSL. Leucine 475 carries the post-translational modification Leucine amide. Positions 488–505 are enriched in basic and acidic residues; that stretch reads VRQVEKRSTTEEQSSKSL. Positions 495 to 505 are excised as a propeptide; the sequence is STTEEQSSKSL.

In terms of tissue distribution, cholinergic motor neuron B15 innervating buccal muscles in Aplysia.

The protein localises to the secreted. Functionally, modulatory neuropeptide, acting presynaptically on nerve terminals to inhibit acetylcholine release. The sequence is that of Buccalin from Aplysia californica (California sea hare).